The sequence spans 156 residues: Ribosomal RNA large subunit methyltransferase H (156 aa).

Residues leucine 73, glycine 104, and 123–128 each bind S-adenosyl-L-methionine; that span reads LSALTL.

This sequence belongs to the RNA methyltransferase RlmH family. In terms of assembly, homodimer.

Its subcellular location is the cytoplasm. It carries out the reaction pseudouridine(1915) in 23S rRNA + S-adenosyl-L-methionine = N(3)-methylpseudouridine(1915) in 23S rRNA + S-adenosyl-L-homocysteine + H(+). In terms of biological role, specifically methylates the pseudouridine at position 1915 (m3Psi1915) in 23S rRNA. This chain is Ribosomal RNA large subunit methyltransferase H, found in Shewanella baltica (strain OS223).